Here is a 493-residue protein sequence, read N- to C-terminus: Mitochondrial distribution and morphology protein 10 (493 aa).

This sequence belongs to the MDM10 family. As to quaternary structure, component of the ER-mitochondria encounter structure (ERMES) or MDM complex, composed of MMM1, MDM10, MDM12 and MDM34. Associates with the mitochondrial outer membrane sorting assembly machinery SAM(core) complex, which consists of SAM35, SAM37 and SAM50, to form a SAM(holo) complex.

The protein resides in the mitochondrion outer membrane. In terms of biological role, component of the ERMES/MDM complex, which serves as a molecular tether to connect the endoplasmic reticulum and mitochondria. Components of this complex are involved in the control of mitochondrial shape and protein biogenesis and may function in phospholipid exchange. MDM10 is involved in the late assembly steps of the general translocase of the mitochondrial outer membrane (TOM complex). Functions in the TOM40-specific route of the assembly of outer membrane beta-barrel proteins, including the association of TOM40 with the receptor TOM22 and small TOM proteins. Can associate with the SAM(core) complex as well as the MDM12-MMM1 complex, both involved in late steps of the major beta-barrel assembly pathway, that is responsible for biogenesis of all outer membrane beta-barrel proteins. May act as a switch that shuttles between both complexes and channels precursor proteins into the TOM40-specific pathway. Plays a role in mitochondrial morphology and in the inheritance of mitochondria. This chain is Mitochondrial distribution and morphology protein 10, found in Saccharomyces cerevisiae (strain YJM789) (Baker's yeast).